The chain runs to 424 residues: Putative fasciclin-like arabinogalactan protein 20 (424 aa).

The chain crosses the membrane as a helical span at residues 46–66; sequence LLTTFFLIFFVLDIDLVATSM. In terms of domain architecture, FAS1 1 spans 56-194; it reads VLDIDLVATS…YVVIYGSDEF (139 aa). N-linked (GlcNAc...) asparagine glycosylation is found at Asn153 and Asn160. A compositionally biased stretch (low complexity) spans 199–226; that stretch reads TKISDDSSSSSSIPSTTSSTGSIPIPSS. The disordered stretch occupies residues 199 to 246; the sequence is TKISDDSSSSSSIPSTTSSTGSIPIPSSATQTPPSPNIASDSTRNLPN. Residues 227–246 are compositionally biased toward polar residues; sequence ATQTPPSPNIASDSTRNLPN. Asn246, Asn283, and Asn287 each carry an N-linked (GlcNAc...) asparagine glycan. The region spanning 250–384 is the FAS1 2 domain; that stretch reads PVNRFNIFES…IAVHGFNQMI (135 aa). The tract at residues 405-424 is disordered; sequence QEEEGVHGEYSSELGDYGLH.

The protein belongs to the fasciclin-like AGP family.

It is found in the membrane. May be a cell surface adhesion protein. The polypeptide is Putative fasciclin-like arabinogalactan protein 20 (FLA20) (Arabidopsis thaliana (Mouse-ear cress)).